Here is a 24-residue protein sequence, read N- to C-terminus: Chlorate reductase subunit beta (24 aa).

As to quaternary structure, heterotrimer of alpha, beta and gamma subunits. It depends on [3Fe-4S] cluster as a cofactor. The cofactor is [4Fe-4S] cluster.

Its subcellular location is the cytoplasm. Its function is as follows. Electron transfer subunit of the chlorate reductase. This chain is Chlorate reductase subunit beta, found in Stutzerimonas chloritidismutans (Pseudomonas chloritidismutans).